The chain runs to 720 residues: Mitogen-activated protein kinase 6 (720 aa).

Met1 is covalently cross-linked (Peptide (Met-Gly) (interchain with G-Cter in ubiquitin)). One can recognise a Protein kinase domain in the interval 20–316; that stretch reads YMDLKPLGCG…AEEALSHPYM (297 aa). ATP is bound by residues 26–34 and Lys49; that span reads LGCGGNGLV. The active-site Proton acceptor is the Asp152. A Phosphoserine; by PAK1, PAK2 and PAK3 modification is found at Ser189. An SEG motif motif is present at residues 189–191; it reads SEG. The FRIEDE motif signature appears at 332 to 337; sequence FHIEDE. Residues Ser386, Ser452, Ser554, and Ser556 each carry the phosphoserine modification. The disordered stretch occupies residues 638–657; it reads SEMLETEPVEEGKRGERGRE. Residues 647-657 show a composition bias toward basic and acidic residues; the sequence is EEGKRGERGRE. Ser683 carries the phosphoserine modification. Residues 698–714 show a composition bias toward polar residues; sequence PSAMKSSPQIPHKTYSN. The interval 698–720 is disordered; the sequence is PSAMKSSPQIPHKTYSNILKHLN.

It belongs to the protein kinase superfamily. CMGC Ser/Thr protein kinase family. MAP kinase subfamily. As to quaternary structure, heterodimer with ERK4/MAPK4. Interacts with (via FRIEDE motif) MAPKAPK5. Interacts with UBE3A; this interaction may be indirect and mediated by HERC2, possibly via HERC2 interaction with NEURL4. Mg(2+) serves as cofactor. In terms of processing, phosphorylated at Ser-189 by PAK1, PAK2 and PAK3 resulting in catalytic activation. Phosphorylated by MAPKAPK5 at other sites. Post-translationally, ubiquitination at Met-1 leads to degradation by the proteasome pathway. In terms of tissue distribution, highest levels within the nervous system, expressed in different tissues, mostly in skeletal muscle.

It localises to the cytoplasm. Its subcellular location is the nucleus. The catalysed reaction is L-seryl-[protein] + ATP = O-phospho-L-seryl-[protein] + ADP + H(+). It catalyses the reaction L-threonyl-[protein] + ATP = O-phospho-L-threonyl-[protein] + ADP + H(+). Activated by phosphorylation at Ser-189. In terms of biological role, atypical MAPK protein. Phosphorylates microtubule-associated protein 2 (MAP2) and MAPKAPK5. The precise role of the complex formed with MAPKAPK5 is still unclear, but the complex follows a complex set of phosphorylation events: upon interaction with atypical MAPKAPK5, ERK3/MAPK6 is phosphorylated at Ser-189 and then mediates phosphorylation and activation of MAPKAPK5, which in turn phosphorylates ERK3/MAPK6. May promote entry in the cell cycle. This Rattus norvegicus (Rat) protein is Mitogen-activated protein kinase 6 (Mapk6).